We begin with the raw amino-acid sequence, 88 residues long: Small ribosomal subunit protein bS18B (88 aa).

This sequence belongs to the bacterial ribosomal protein bS18 family. Part of the 30S ribosomal subunit. Forms a tight heterodimer with protein bS6.

In terms of biological role, binds as a heterodimer with protein bS6 to the central domain of the 16S rRNA, where it helps stabilize the platform of the 30S subunit. The chain is Small ribosomal subunit protein bS18B from Mycolicibacterium paratuberculosis (strain ATCC BAA-968 / K-10) (Mycobacterium paratuberculosis).